Consider the following 307-residue polypeptide: Recombination-associated protein RdgC (307 aa).

Belongs to the RdgC family.

It localises to the cytoplasm. The protein resides in the nucleoid. Its function is as follows. May be involved in recombination. This chain is Recombination-associated protein RdgC, found in Colwellia psychrerythraea (strain 34H / ATCC BAA-681) (Vibrio psychroerythus).